Here is a 150-residue protein sequence, read N- to C-terminus: Large ribosomal subunit protein uL23m (150 aa).

The protein belongs to the universal ribosomal protein uL23 family. In terms of assembly, component of the mitochondrial ribosome large subunit (39S) which comprises a 16S rRNA and about 50 distinct proteins.

Its subcellular location is the mitochondrion. This is Large ribosomal subunit protein uL23m (mRpL23) from Drosophila melanogaster (Fruit fly).